Reading from the N-terminus, the 161-residue chain is 2-C-methyl-D-erythritol 2,4-cyclodiphosphate synthase (161 aa).

A divalent metal cation contacts are provided by Asp9 and His11. 4-CDP-2-C-methyl-D-erythritol 2-phosphate-binding positions include 9-11 (DFH) and 37-38 (HS). His45 is a binding site for a divalent metal cation. Residues 59-61 (DIG), 64-68 (FPDTD), 135-138 (TTTE), and Arg145 each bind 4-CDP-2-C-methyl-D-erythritol 2-phosphate.

This sequence belongs to the IspF family. Homotrimer. A divalent metal cation serves as cofactor.

It carries out the reaction 4-CDP-2-C-methyl-D-erythritol 2-phosphate = 2-C-methyl-D-erythritol 2,4-cyclic diphosphate + CMP. Its pathway is isoprenoid biosynthesis; isopentenyl diphosphate biosynthesis via DXP pathway; isopentenyl diphosphate from 1-deoxy-D-xylulose 5-phosphate: step 4/6. Its function is as follows. Involved in the biosynthesis of isopentenyl diphosphate (IPP) and dimethylallyl diphosphate (DMAPP), two major building blocks of isoprenoid compounds. Catalyzes the conversion of 4-diphosphocytidyl-2-C-methyl-D-erythritol 2-phosphate (CDP-ME2P) to 2-C-methyl-D-erythritol 2,4-cyclodiphosphate (ME-CPP) with a corresponding release of cytidine 5-monophosphate (CMP). The chain is 2-C-methyl-D-erythritol 2,4-cyclodiphosphate synthase from Leptospira borgpetersenii serovar Hardjo-bovis (strain JB197).